The chain runs to 426 residues: O-methyltransferase pyvH (426 aa).

S-adenosyl-L-methionine-binding positions include 258-259, D281, 308-309, and R323; these read GG and DF. H327 (proton acceptor) is an active-site residue.

Belongs to the class I-like SAM-binding methyltransferase superfamily. Cation-independent O-methyltransferase family.

Its pathway is secondary metabolite biosynthesis. In terms of biological role, O-methyltransferase; part of the gene cluster that mediates the biosynthesis of pyranoviolin A, a pyranonigrin analog with a C-3 methoxy group. Initially, the PKS portion of pyvA synthesizes C-10 carbon chain from 5 molecules of malonyl-CoA, which is then condensed with the thiolation (T) domain-bound glycine activated by the adenylation (A) domain. The subsequent chain release by Dieckmann condensation (DKC) could be catalyzed by the TE domain present at the C-terminus of pyvA and/or the alpha/beta hydrolase pyvD, installing the tetramic acid moiety. The FAD-dependent monooxygenase pyvC next epoxidizes one of the olefins of the polyketide part, and the epoxide ring-opening induces the dihydro-gamma-pyrone ring formation. The cytochrome P450 monooxygeanse pyvB would be responsible for the 2 consecutive reactions, in which the dihydro-gamma-pyrone is oxidized to gamma-pyrone and C-7 is hydroxylated to yield pyranonigrin F. Finally, the O-methyltransferase pyvH methylates the C-3 hydroxy group to complete the biosynthesis. The sequence is that of O-methyltransferase pyvH from Aspergillus violaceofuscus (strain CBS 115571).